A 199-amino-acid polypeptide reads, in one-letter code: Recombination protein RecR (199 aa).

A C4-type zinc finger spans residues C58–C73. The Toprim domain maps to G81 to P176.

Belongs to the RecR family.

In terms of biological role, may play a role in DNA repair. It seems to be involved in an RecBC-independent recombinational process of DNA repair. It may act with RecF and RecO. The sequence is that of Recombination protein RecR from Paracoccus denitrificans (strain Pd 1222).